We begin with the raw amino-acid sequence, 315 residues long: Putative peptide transport system permease protein BMEII0209 (315 aa).

6 helical membrane-spanning segments follow: residues 13–33 (AIPV…LLPG), 102–122 (LALL…VVAA), 136–156 (LALL…VILF), 178–198 (WLRS…GYLA), 238–258 (VSVL…SVVI), and 287–307 (MLFL…LYTI). Positions 96–305 (LPVTISLALL…AINVLVDILY (210 aa)) constitute an ABC transmembrane type-1 domain.

This sequence belongs to the binding-protein-dependent transport system permease family. As to quaternary structure, the complex is composed of two ATP-binding proteins (BMEII0205 and BMEII0206), two transmembrane proteins (BMEII0207/BMEII0208 and BMEII0209) and a solute-binding protein (BMEII0210).

It is found in the cell inner membrane. Probably part of an ABC transporter complex that could be involved in peptide import. Probably responsible for the translocation of the substrate across the membrane. In Brucella melitensis biotype 1 (strain ATCC 23456 / CCUG 17765 / NCTC 10094 / 16M), this protein is Putative peptide transport system permease protein BMEII0209.